The chain runs to 49 residues: Peridinin-chlorophyll a-binding protein (49 aa).

As to quaternary structure, monomer. Binds 12 peridinin and 2 chlorophyll a molecules per monomer.

The protein resides in the plastid. Its subcellular location is the chloroplast. Its function is as follows. Water-soluble antenna for capture of solar energy in the blue-green range. Peridinin is an asymmetric carotenoid. The sequence is that of Peridinin-chlorophyll a-binding protein from Alexandrium cohorticula (Dinoflagellate).